A 409-amino-acid polypeptide reads, in one-letter code: MAQNFTKLNPQFENIIFEHDDNQMILNFGPQHPSSHGQLRLILELEGEKIIKATPEIGYLHRGCEKLGENMTYNEYMPTTDRLDYTSSTSNNYAYAYAVETLLNLEIPRRAQVIRTILLELNRMISHIFFISVHALDVGAMSVFLYAFKTREYGLDLMEDYCGARLTHNAIRIGGVPLDLPPNWLEGLKKFLGEMRECKKLIQGLLDKNRIWRMRLENVGVVTQKMAQSWGMSGIMLRGTGIAYDIRKEEPYELYKELDFDVPVGNYGDSYDRYCLYMLEIDESIRIIEQLIPMYAKTDTPIMAQNPHYISAPKEDIMTQNYALMQHFVLVAQGMRPPIGEVYAPTESPKGELGFFIHSEGEPYPHRLKIRAPSFYHIGALSDILVGQYLADAVTVIGSTNAVFGEVDR.

It belongs to the complex I 49 kDa subunit family. As to quaternary structure, NDH-1 is composed of 14 different subunits. Subunits NuoB, C, D, E, F, and G constitute the peripheral sector of the complex.

The protein resides in the cell inner membrane. The enzyme catalyses a quinone + NADH + 5 H(+)(in) = a quinol + NAD(+) + 4 H(+)(out). Functionally, NDH-1 shuttles electrons from NADH, via FMN and iron-sulfur (Fe-S) centers, to quinones in the respiratory chain. The immediate electron acceptor for the enzyme in this species is believed to be ubiquinone. Couples the redox reaction to proton translocation (for every two electrons transferred, four hydrogen ions are translocated across the cytoplasmic membrane), and thus conserves the redox energy in a proton gradient. This Helicobacter pylori (strain HPAG1) protein is NADH-quinone oxidoreductase subunit D.